The sequence spans 29 residues: Cytochrome b6-f complex subunit 8 (29 aa).

A helical transmembrane segment spans residues 3 to 23; the sequence is IISLGWSSLLVVFTFSLSLVV.

This sequence belongs to the PetN family. The 4 large subunits of the cytochrome b6-f complex are cytochrome b6, subunit IV (17 kDa polypeptide, PetD), cytochrome f and the Rieske protein, while the 4 small subunits are PetG, PetL, PetM and PetN. The complex functions as a dimer.

The protein localises to the plastid. It localises to the chloroplast thylakoid membrane. Component of the cytochrome b6-f complex, which mediates electron transfer between photosystem II (PSII) and photosystem I (PSI), cyclic electron flow around PSI, and state transitions. In Rhodomonas salina (Cryptomonas salina), this protein is Cytochrome b6-f complex subunit 8.